We begin with the raw amino-acid sequence, 871 residues long: Chaperone protein ClpB 1 (871 aa).

In terms of domain architecture, Clp R spans 6–147 (PNQFTEKAWA…REAIQQIRGS (142 aa)). Repeat regions lie at residues 9–73 (FTEK…ISRQ) and 84–147 (LGQS…IRGS). The segment at 160 to 341 (AALEKYGRDL…RRFQQVYVDQ (182 aa)) is NBD1. Residue 207–214 (GEPGVGKT) participates in ATP binding. Residues 342 to 550 (PSVEDTISIL…IAEIISKWTG (209 aa)) are linker. Residues 392–526 (IDLVDEAAAK…AEAKLREIQV (135 aa)) adopt a coiled-coil conformation. The tract at residues 560-771 (EAQKLLHLEE…RVDEFIIFHS (212 aa)) is NBD2. 610 to 617 (GPTGVGKT) lines the ATP pocket. The tract at residues 772–871 (LRKDQLRQIV…FRRQVELATV (100 aa)) is C-terminal.

Belongs to the ClpA/ClpB family. Homohexamer. The oligomerization is ATP-dependent.

The protein localises to the cytoplasm. In terms of biological role, part of a stress-induced multi-chaperone system, it is involved in the recovery of the cell from heat-induced damage, in cooperation with DnaK, DnaJ and GrpE. Acts before DnaK, in the processing of protein aggregates. Protein binding stimulates the ATPase activity; ATP hydrolysis unfolds the denatured protein aggregates, which probably helps expose new hydrophobic binding sites on the surface of ClpB-bound aggregates, contributing to the solubilization and refolding of denatured protein aggregates by DnaK. The polypeptide is Chaperone protein ClpB 1 (clpB1) (Thermosynechococcus vestitus (strain NIES-2133 / IAM M-273 / BP-1)).